We begin with the raw amino-acid sequence, 470 residues long: Angiopoietin-related protein 6 (470 aa).

The first 20 residues, M1–A20, serve as a signal peptide directing secretion. N58 carries N-linked (GlcNAc...) asparagine glycosylation. Residues A59–H116 adopt a coiled-coil conformation. An N-linked (GlcNAc...) (complex) asparagine glycan is attached at N145. The segment at S214–V249 is disordered. Residues T251 to K469 enclose the Fibrinogen C-terminal domain. 2 cysteine pairs are disulfide-bonded: C260–C287 and C410–C423.

The protein resides in the secreted. In terms of biological role, may play a role in the wound healing process. May promote epidermal proliferation, remodeling and regeneration. May promote the chemotactic activity of endothelial cells and induce neovascularization. May counteract high-fat diet-induced obesity and related insulin resistance through increased energy expenditure. This chain is Angiopoietin-related protein 6 (ANGPTL6), found in Homo sapiens (Human).